A 119-amino-acid polypeptide reads, in one-letter code: Holo-[acyl-carrier-protein] synthase (119 aa).

Mg(2+) contacts are provided by aspartate 5 and glutamate 51.

The protein belongs to the P-Pant transferase superfamily. AcpS family. It depends on Mg(2+) as a cofactor.

It localises to the cytoplasm. It catalyses the reaction apo-[ACP] + CoA = holo-[ACP] + adenosine 3',5'-bisphosphate + H(+). Its function is as follows. Transfers the 4'-phosphopantetheine moiety from coenzyme A to a Ser of acyl-carrier-protein. The sequence is that of Holo-[acyl-carrier-protein] synthase from Helicobacter pylori (strain J99 / ATCC 700824) (Campylobacter pylori J99).